The following is a 646-amino-acid chain: Autophagy-related protein 28 (646 aa).

2 disordered regions span residues 1–148 (MSSP…HVDN) and 221–245 (PTRSTPDGNVIPVRQPVSNKPRGLK). The segment covering 12-21 (SPRQRLSNPL) has biased composition (polar residues). The segment covering 63–75 (SATSTRRSSSPAS) has biased composition (low complexity). Residues 106-122 (MMMNQHPSRQSTVSSHG) are compositionally biased toward polar residues. Coiled-coil stretches lie at residues 283–350 (LDKM…MEDV) and 485–514 (QQAAMQSQLSEMDDVVQELQKRLQLAESKH). Disordered regions lie at residues 475-494 (SQAGDADEEPQQAAMQSQLS) and 546-612 (AAAV…RGSA). Basic and acidic residues-rich tracts occupy residues 557 to 575 (STDKAEGTSQEERADSHDE) and 588 to 597 (RMEDHDHDPP).

The protein belongs to the ATG28 family.

The protein resides in the cytoplasm. The protein localises to the vacuole membrane. Its subcellular location is the cytoplasmic vesicle membrane. Required for the autophagic degradation of peroxisomes called pexophagy, but not essential for general autophagy. Involved in resistance to elevated pH. This Gibberella zeae (strain ATCC MYA-4620 / CBS 123657 / FGSC 9075 / NRRL 31084 / PH-1) (Wheat head blight fungus) protein is Autophagy-related protein 28.